The sequence spans 527 residues: Protein PyrBI (527 aa).

An aspartate carbamoyltransferase region spans residues 1 to 342; the sequence is MKRDFLGRTL…MFGGALEAPF (342 aa). The interval 343 to 357 is linker; sequence DTSKKEEKPEEDFII. Positions 368 to 527 are aspartate carbamoyltransferase regulatory region; the sequence is VQKEGKRGIK…PHSFEEIWSI (160 aa). Residues Cys-483, Cys-488, Cys-512, and Cys-515 each contribute to the Zn(2+) site.

This sequence in the N-terminal section; belongs to the aspartate/ornithine carbamoyltransferase superfamily. ATCase family. In the C-terminal section; belongs to the PyrI family.

It catalyses the reaction carbamoyl phosphate + L-aspartate = N-carbamoyl-L-aspartate + phosphate + H(+). It functions in the pathway pyrimidine metabolism; UMP biosynthesis via de novo pathway; (S)-dihydroorotate from bicarbonate: step 2/3. This Thermotoga maritima (strain ATCC 43589 / DSM 3109 / JCM 10099 / NBRC 100826 / MSB8) protein is Protein PyrBI (pyrBI).